Reading from the N-terminus, the 560-residue chain is Diphtheria toxin (560 aa).

Residues 1–25 (MSRKLFASILIGALLGIGAPPSAHA) form the signal peptide. NAD(+)-binding residues include His-46 and Tyr-90. The active site involves Glu-173. Disulfide bonds link Cys-211-Cys-226 and Cys-486-Cys-496.

As to quaternary structure, homodimer.

It carries out the reaction diphthamide-[translation elongation factor 2] + NAD(+) = N-(ADP-D-ribosyl)diphthamide-[translation elongation factor 2] + nicotinamide + H(+). Its function is as follows. Diphtheria toxin, produced by a phage infecting Corynebacterium diphtheriae, is a proenzyme that, after activation, catalyzes the covalent attachment of the ADP ribose moiety of NAD to elongation factor 2. Fragment A is responsible for enzymatic ADP-ribosylation of elongation factor 2, while fragment B is responsible for binding of toxin to cell receptors and entry of fragment A. In Corynephage omega, this protein is Diphtheria toxin.